The sequence spans 307 residues: GTPase Era (307 aa).

In terms of domain architecture, Era-type G spans 13 to 180 (RCGFVALIGA…RRALAEMVPP (168 aa)). Positions 21–28 (GAPNVGKS) are G1. 21–28 (GAPNVGKS) contributes to the GTP binding site. The segment at 47 to 51 (QTTRA) is G2. The G3 stretch occupies residues 68 to 71 (DTPG). Residues 68-72 (DTPGI) and 130-133 (NKVD) contribute to the GTP site. The tract at residues 130-133 (NKVD) is G4. Positions 159 to 161 (ISA) are G5. Residues 211 to 288 (LHQELPYQST…HLFLFVKVRE (78 aa)) form the KH type-2 domain.

It belongs to the TRAFAC class TrmE-Era-EngA-EngB-Septin-like GTPase superfamily. Era GTPase family. In terms of assembly, monomer.

It is found in the cytoplasm. It localises to the cell inner membrane. Its function is as follows. An essential GTPase that binds both GDP and GTP, with rapid nucleotide exchange. Plays a role in 16S rRNA processing and 30S ribosomal subunit biogenesis and possibly also in cell cycle regulation and energy metabolism. This Bradyrhizobium sp. (strain ORS 278) protein is GTPase Era.